The chain runs to 572 residues: Proline--tRNA ligase (572 aa).

Belongs to the class-II aminoacyl-tRNA synthetase family. ProS type 1 subfamily. As to quaternary structure, homodimer.

Its subcellular location is the cytoplasm. It carries out the reaction tRNA(Pro) + L-proline + ATP = L-prolyl-tRNA(Pro) + AMP + diphosphate. Catalyzes the attachment of proline to tRNA(Pro) in a two-step reaction: proline is first activated by ATP to form Pro-AMP and then transferred to the acceptor end of tRNA(Pro). As ProRS can inadvertently accommodate and process non-cognate amino acids such as alanine and cysteine, to avoid such errors it has two additional distinct editing activities against alanine. One activity is designated as 'pretransfer' editing and involves the tRNA(Pro)-independent hydrolysis of activated Ala-AMP. The other activity is designated 'posttransfer' editing and involves deacylation of mischarged Ala-tRNA(Pro). The misacylated Cys-tRNA(Pro) is not edited by ProRS. This is Proline--tRNA ligase from Escherichia coli O9:H4 (strain HS).